Reading from the N-terminus, the 299-residue chain is Elongation factor Ts, mitochondrial (299 aa).

The N-terminal 18 residues, 1 to 18 (MLFQRRLHFHQFFGKTRV), are a transit peptide targeting the mitochondrion.

The protein belongs to the EF-Ts family.

The protein resides in the mitochondrion. Its function is as follows. Associates with the EF-Tu.GDP complex and induces the exchange of GDP to GTP. It remains bound to the aminoacyl-tRNA.EF-Tu.GTP complex up to the GTP hydrolysis stage on the ribosome. The protein is Elongation factor Ts, mitochondrial (tsf1) of Schizosaccharomyces pombe (strain 972 / ATCC 24843) (Fission yeast).